Here is an 88-residue protein sequence, read N- to C-terminus: Small ribosomal subunit protein uS17 (88 aa).

Belongs to the universal ribosomal protein uS17 family. Part of the 30S ribosomal subunit.

Its function is as follows. One of the primary rRNA binding proteins, it binds specifically to the 5'-end of 16S ribosomal RNA. The chain is Small ribosomal subunit protein uS17 from Lactobacillus gasseri (strain ATCC 33323 / DSM 20243 / BCRC 14619 / CIP 102991 / JCM 1131 / KCTC 3163 / NCIMB 11718 / NCTC 13722 / AM63).